The primary structure comprises 232 residues: Octanoyltransferase (232 aa).

Residues 40-226 (GSAPERVWLL…TWQDLFGSVP (187 aa)) form the BPL/LPL catalytic domain. Substrate-binding positions include 79–86 (RGGQWTYH), 157–159 (ALG), and 170–172 (GVA). Cysteine 188 functions as the Acyl-thioester intermediate in the catalytic mechanism.

The protein belongs to the LipB family.

The protein localises to the cytoplasm. The enzyme catalyses octanoyl-[ACP] + L-lysyl-[protein] = N(6)-octanoyl-L-lysyl-[protein] + holo-[ACP] + H(+). It functions in the pathway protein modification; protein lipoylation via endogenous pathway; protein N(6)-(lipoyl)lysine from octanoyl-[acyl-carrier-protein]: step 1/2. In terms of biological role, catalyzes the transfer of endogenously produced octanoic acid from octanoyl-acyl-carrier-protein onto the lipoyl domains of lipoate-dependent enzymes. Lipoyl-ACP can also act as a substrate although octanoyl-ACP is likely to be the physiological substrate. The chain is Octanoyltransferase from Gluconacetobacter diazotrophicus (strain ATCC 49037 / DSM 5601 / CCUG 37298 / CIP 103539 / LMG 7603 / PAl5).